A 378-amino-acid polypeptide reads, in one-letter code: Glutamate 5-kinase (378 aa).

Lysine 20 contacts ATP. Positions 60, 147, and 159 each coordinate substrate. ATP is bound by residues 179–180 and 221–227; these read TD and TGGMLTK. A PUA domain is found at 286-364; that stretch reads RGRVVLDAGA…SQIARILGSM (79 aa).

Belongs to the glutamate 5-kinase family.

It is found in the cytoplasm. The enzyme catalyses L-glutamate + ATP = L-glutamyl 5-phosphate + ADP. The protein operates within amino-acid biosynthesis; L-proline biosynthesis; L-glutamate 5-semialdehyde from L-glutamate: step 1/2. In terms of biological role, catalyzes the transfer of a phosphate group to glutamate to form L-glutamate 5-phosphate. This is Glutamate 5-kinase from Bordetella petrii (strain ATCC BAA-461 / DSM 12804 / CCUG 43448).